A 277-amino-acid chain; its full sequence is Thiazole synthase (277 aa).

K118 serves as the catalytic Schiff-base intermediate with DXP. Residues G179, 205–206, and 227–228 contribute to the 1-deoxy-D-xylulose 5-phosphate site; these read AG and NT.

Belongs to the ThiG family. As to quaternary structure, homotetramer. Forms heterodimers with either ThiH or ThiS.

Its subcellular location is the plastid. It localises to the chloroplast. The enzyme catalyses [ThiS sulfur-carrier protein]-C-terminal-Gly-aminoethanethioate + 2-iminoacetate + 1-deoxy-D-xylulose 5-phosphate = [ThiS sulfur-carrier protein]-C-terminal Gly-Gly + 2-[(2R,5Z)-2-carboxy-4-methylthiazol-5(2H)-ylidene]ethyl phosphate + 2 H2O + H(+). Its pathway is cofactor biosynthesis; thiamine diphosphate biosynthesis. Its function is as follows. Catalyzes the rearrangement of 1-deoxy-D-xylulose 5-phosphate (DXP) to produce the thiazole phosphate moiety of thiamine. Sulfur is provided by the thiocarboxylate moiety of the carrier protein ThiS. In vitro, sulfur can be provided by H(2)S. This is Thiazole synthase from Emiliania huxleyi (Coccolithophore).